Consider the following 204-residue polypeptide: Transmembrane protein 186 (204 aa).

The Mitochondrial matrix portion of the chain corresponds to 1–69 (MLELLCRVSP…RLVAALSRLK (69 aa)). Residues 70 to 90 (VYQAVITAAGTPIVFALGSAG) form a helical membrane-spanning segment. Topologically, residues 91–95 (QLSTD) are mitochondrial intermembrane. The helical transmembrane segment at 96 to 116 (ALAIYAAIGVTGLITLTLASY) threads the bilayer. Over 117-204 (ASSNLVGFIY…RQLFEGLFGN (88 aa)) the chain is Mitochondrial matrix.

This sequence belongs to the TMEM186 family. Associates with mitochondrial complex I assembly intermediates during its biogenesis.

It localises to the mitochondrion inner membrane. In terms of biological role, as part of the MCIA complex, required for efficient assembly of the mitochondrial complex I. This is Transmembrane protein 186 from Drosophila melanogaster (Fruit fly).